Consider the following 262-residue polypeptide: Calbindin (262 aa).

An N-acetylthreonine modification is found at threonine 2. EF-hand domains are found at residues 12–47, 54–89, 99–134, 143–178, and 187–222; these read ISAA…LQQA, DLTP…EENF, KSSE…LLQK, KLTE…QENF, and MCAK…LCEK. Ca(2+) contacts are provided by aspartate 25, aspartate 27, asparagine 29, tyrosine 31, and glutamate 36. Ca(2+) contacts are provided by aspartate 112, aspartate 114, serine 116, glutamate 123, aspartate 156, asparagine 158, aspartate 160, lysine 162, glutamate 167, aspartate 200, aspartate 202, asparagine 204, tyrosine 206, and glutamate 211.

The protein belongs to the calbindin family. In terms of tissue distribution, highly abundant in supporting cells. Also present in hair cells.

Its function is as follows. Buffers cytosolic calcium. May stimulate a membrane Ca(2+)-ATPase and a 3',5'-cyclic nucleotide phosphodiesterase. This chain is Calbindin (CALB1), found in Gallus gallus (Chicken).